The sequence spans 149 residues: Large ribosomal subunit protein uL13 (149 aa).

Belongs to the universal ribosomal protein uL13 family. As to quaternary structure, part of the 50S ribosomal subunit.

This protein is one of the early assembly proteins of the 50S ribosomal subunit, although it is not seen to bind rRNA by itself. It is important during the early stages of 50S assembly. This is Large ribosomal subunit protein uL13 from Pelodictyon phaeoclathratiforme (strain DSM 5477 / BU-1).